We begin with the raw amino-acid sequence, 34 residues long: Photosystem II reaction center protein M (34 aa).

The chain crosses the membrane as a helical span at residues I5–I25.

The protein belongs to the PsbM family. In terms of assembly, PSII is composed of 1 copy each of membrane proteins PsbA, PsbB, PsbC, PsbD, PsbE, PsbF, PsbH, PsbI, PsbJ, PsbK, PsbL, PsbM, PsbT, PsbX, PsbY, PsbZ, Psb30/Ycf12, at least 3 peripheral proteins of the oxygen-evolving complex and a large number of cofactors. It forms dimeric complexes. Detected in both etioplasts and green leaves; PSII is only assembled in green leaves.

Its subcellular location is the plastid. It localises to the chloroplast thylakoid membrane. In terms of biological role, one of the components of the core complex of photosystem II (PSII). PSII is a light-driven water:plastoquinone oxidoreductase that uses light energy to abstract electrons from H(2)O, generating O(2) and a proton gradient subsequently used for ATP formation. It consists of a core antenna complex that captures photons, and an electron transfer chain that converts photonic excitation into a charge separation. This subunit is found at the monomer-monomer interface. The protein is Photosystem II reaction center protein M of Hordeum vulgare (Barley).